The chain runs to 59 residues: Large ribosomal subunit protein uL30 (59 aa).

This sequence belongs to the universal ribosomal protein uL30 family. As to quaternary structure, part of the 50S ribosomal subunit.

The protein is Large ribosomal subunit protein uL30 of Mycobacterium sp. (strain JLS).